The sequence spans 115 residues: Large ribosomal subunit protein bL19 (115 aa).

This sequence belongs to the bacterial ribosomal protein bL19 family.

Functionally, this protein is located at the 30S-50S ribosomal subunit interface and may play a role in the structure and function of the aminoacyl-tRNA binding site. In Francisella tularensis subsp. tularensis (strain FSC 198), this protein is Large ribosomal subunit protein bL19.